A 31-amino-acid chain; its full sequence is Putative translational regulatory protein ArgL (31 aa).

In terms of biological role, may serve a regulatory role in expression of downstream gene argF; in an argL-argF-lacZ fusion mutation of the start codon to a stop codon in argL increases expression of beta-galactosidase. The chain is Putative translational regulatory protein ArgL from Escherichia coli (strain K12).